The chain runs to 423 residues: Hypoxia responsive morphology factor B (423 aa).

The short motif at 46-69 (KRSKTRRPKKEYKLQYENTKAHRV) is the Bipartite nuclear localization signal element. Residues 157-187 (TQNCWAYRAAYLNAVHTIFSEQICSAMEVSP) are RNA recognition motif (RRM)-like domain. Over residues 243 to 257 (LSPQSGRGPEPSTQI) the composition is skewed to polar residues. The segment at 243 to 273 (LSPQSGRGPEPSTQIAEPGRHDSQSEQSTIS) is disordered.

Belongs to the hrmA family.

It is found in the nucleus. Its function is as follows. Probably modulates the generation of the hypoxia-typic morphotype (called H-MORPH) with altered biofilm architecture that leads to increased host inflammation, rapid disease progression, and mortality in a murine model of invasive aspergillosis. This chain is Hypoxia responsive morphology factor B, found in Aspergillus fumigatus (strain CBS 144.89 / FGSC A1163 / CEA10) (Neosartorya fumigata).